The sequence spans 42 residues: Beta-defensin 6 (42 aa).

Q1 carries the post-translational modification Pyrrolidone carboxylic acid. Disulfide bonds link C9/C38, C16/C31, and C21/C39.

This sequence belongs to the beta-defensin family. Neutrophilic granules.

It localises to the secreted. Functionally, has bactericidal activity. Active against E.coli ML35 and S.aureus 502A. The chain is Beta-defensin 6 (DEFB6) from Bos taurus (Bovine).